A 174-amino-acid chain; its full sequence is Ferredoxin-thioredoxin reductase, variable chain, chloroplastic (174 aa).

The transit peptide at 1-62 (MTTGVAVMSS…RTRARLAICC (62 aa)) directs the protein to the chloroplast. Over residues 69-81 (DSSTGFDSSSSSP) the composition is skewed to low complexity. Residues 69-89 (DSSTGFDSSSSSPPEEDEELK) form a disordered region. Phosphoserine is present on residues Ser-70 and Ser-71.

This sequence belongs to the ferredoxin thioredoxin reductase alpha subunit family. In terms of assembly, heterodimer of subunit A (variable subunit) and subunit B (catalytic subunit). Heterodimeric FTR forms a complex with ferredoxin and thioredoxin.

It localises to the plastid. The protein resides in the chloroplast. Variable subunit of the ferredoxin-thioredoxin reductase (FTR), which catalyzes the two-electron reduction of thioredoxins by the electrons provided by reduced ferredoxin. This Spinacia oleracea (Spinach) protein is Ferredoxin-thioredoxin reductase, variable chain, chloroplastic (FTRV).